The primary structure comprises 372 residues: tRNA N6-adenosine threonylcarbamoyltransferase (372 aa).

A divalent metal cation is bound by residues His-133, His-137, and Tyr-154. Substrate is bound by residues 154–158, Asp-186, Gly-201, Glu-205, and Asn-301; that span reads YVSGG. Position 330 (Asp-330) interacts with a divalent metal cation.

Belongs to the KAE1 / TsaD family. In terms of assembly, component of the EKC/KEOPS complex composed of at least BUD32, CGI121, GON7, KAE1 and PCC1; the whole complex dimerizes. A divalent metal cation serves as cofactor.

Its subcellular location is the cytoplasm. It localises to the nucleus. The catalysed reaction is L-threonylcarbamoyladenylate + adenosine(37) in tRNA = N(6)-L-threonylcarbamoyladenosine(37) in tRNA + AMP + H(+). Functionally, component of the EKC/KEOPS complex that is required for the formation of a threonylcarbamoyl group on adenosine at position 37 (t(6)A37) in tRNAs that read codons beginning with adenine. The complex is probably involved in the transfer of the threonylcarbamoyl moiety of threonylcarbamoyl-AMP (TC-AMP) to the N6 group of A37. KAE1 likely plays a direct catalytic role in this reaction, but requires other protein(s) of the complex to fulfill this activity. The EKC/KEOPS complex also promotes both telomere uncapping and telomere elongation. The complex is required for efficient recruitment of transcriptional coactivators. The sequence is that of tRNA N6-adenosine threonylcarbamoyltransferase from Candida albicans (strain SC5314 / ATCC MYA-2876) (Yeast).